We begin with the raw amino-acid sequence, 75 residues long: Putative UPF0377 protein YJL222W-A (75 aa).

Belongs to the UPF0377 family.

The sequence is that of Putative UPF0377 protein YJL222W-A from Saccharomyces cerevisiae (strain ATCC 204508 / S288c) (Baker's yeast).